The sequence spans 417 residues: MTPQVASDSAVPWPRRRTQAVNIGHVTVGGGHPVVVQSMTNTDTADVVASTKQVAELWRAGSEMVRLTVNNAQSAAAIPRIAERLAMMGIDVPLIGDFHYNGHQLLADEPACAEVLAKYRINPGNVGFGKKRDLQFGQLIECAIRYGKPIRIGANWGSLDQMLAAQLMDENNRRKQPWDAAQVLREVLICSAVGSAERAVELGLPRDRIVLSAKVSGVQELIAVYRDMAARCDFALHLGLTEAGIGSKGIVASSAALAVLLQEGIGDTIRISLTPEPGQSRTQEVIVAQELLQTTGHRAFTPMVTACPGCGRTTSEFFQELAKTVQQHVRDKMQVWKITHPGAETMTLAVMGCVVNGPGESRHANIGISLPGTGEMPVAPVFIDGEKSVTLRGENIAQDFIALVDDYVERRYARFPD.

Residues Cys307, Cys310, Cys353, and Glu360 each coordinate [4Fe-4S] cluster.

Belongs to the IspG family. It depends on [4Fe-4S] cluster as a cofactor.

It catalyses the reaction (2E)-4-hydroxy-3-methylbut-2-enyl diphosphate + oxidized [flavodoxin] + H2O + 2 H(+) = 2-C-methyl-D-erythritol 2,4-cyclic diphosphate + reduced [flavodoxin]. It participates in isoprenoid biosynthesis; isopentenyl diphosphate biosynthesis via DXP pathway; isopentenyl diphosphate from 1-deoxy-D-xylulose 5-phosphate: step 5/6. Functionally, converts 2C-methyl-D-erythritol 2,4-cyclodiphosphate (ME-2,4cPP) into 1-hydroxy-2-methyl-2-(E)-butenyl 4-diphosphate. The sequence is that of 4-hydroxy-3-methylbut-2-en-1-yl diphosphate synthase (flavodoxin) from Xylella fastidiosa (strain 9a5c).